The chain runs to 21 residues: Mast cell protease 3 (21 aa).

The region spanning 1-21 (IIGGVESRPHSRPYMATLEIT) is the Peptidase S1 domain. The disordered stretch occupies residues 1–21 (IIGGVESRPHSRPYMATLEIT).

The protein belongs to the peptidase S1 family. Granzyme subfamily.

Thrombin inactivating protease. Displays chymotrypsin-like substrate specificity. The polypeptide is Mast cell protease 3 (Mcpt3) (Mus musculus (Mouse)).